The chain runs to 352 residues: Phenylalanine--tRNA ligase alpha subunit (352 aa).

Glu-258 contacts Mg(2+).

This sequence belongs to the class-II aminoacyl-tRNA synthetase family. Phe-tRNA synthetase alpha subunit type 1 subfamily. In terms of assembly, tetramer of two alpha and two beta subunits. Mg(2+) is required as a cofactor.

The protein localises to the cytoplasm. It carries out the reaction tRNA(Phe) + L-phenylalanine + ATP = L-phenylalanyl-tRNA(Phe) + AMP + diphosphate + H(+). In Staphylococcus aureus (strain bovine RF122 / ET3-1), this protein is Phenylalanine--tRNA ligase alpha subunit.